We begin with the raw amino-acid sequence, 180 residues long: MPSSVPKTSIESLGSPSSLSSSQASEPLCPLKHPSHRPPASTLSPNLTSSTESLGYLSSLSSSQPPEPLRPLECPSHKPCGRSLPRRRNPGWVSWSDSMQADSETDAIICPMCKAPERSCPHTWWVPSSPRVIRGVGRCSDPNLGLSWRQEAARAWCHCTSSQYPFKHPNLPTHLPKASF.

The interval 1–93 (MPSSVPKTSI…LPRRRNPGWV (93 aa)) is disordered. 2 stretches are compositionally biased toward low complexity: residues 9–25 (SIES…SQAS) and 47–64 (LTSS…SSSQ).

This is an uncharacterized protein from Homo sapiens (Human).